A 314-amino-acid polypeptide reads, in one-letter code: Protein SPOROCYTELESS (314 aa).

Polar residues predominate over residues 1–17 (MATSLFFMSTDQNSVGN). 2 disordered regions span residues 1 to 20 (MATSLFFMSTDQNSVGNPND) and 33 to 62 (GEIRTETLKSRGRKPGSKTGQQKQKKPTLR). The short motif at 62 to 70 (RGMGVAKLE) is the SPL element. The short motif at 308–314 (IDLSLKL) is the EAR element.

This sequence belongs to the NOZZLE family. In terms of assembly, homodimer and heterodimer with SPEARs. Interacts in vitro with YAB1, YAB3 and YAB4. Interacts (via EAR motif) with TPL, TPR1, TPR2, TPR3 and TPR4. Interacts with SPEAR1, SPEAR2, SPEAR3, SPEAR4, TCP1, TCP6, TCP8, TCP9, TCP11, TCP15, TCP20, TCP21 and TCP23. Interacts with TCP2, TCP3, TCP4, TCP5, TCP10, TCP13, TCP17 and TCP24. As to expression, expressed in flower buds. Not found in leaves, siliques and stems. Detected in rosette leaves, stem tissue and seedlings.

Its subcellular location is the nucleus. In terms of biological role, transcriptional regulator of sporocyte development. Acts as an adapter-like transcriptional repressor recruiting TPL/TPR corepressors to inhibit TCP transcription factors. Required for nucellus and embryo sac development. Plays a central role in patterning both the proximal-distal and the adaxial-abaxial axes during ovule development. Involved in establishing the prospective chalaza of the ovule and in controlling the cell number and the length of the funiculus, and is required for the development of the integuments. Required, with BEL1, for cytokinin-induced PIN1 expression in ovules. Involved in controlling stamen identity. May also regulate the morphology of lateral organs by repressing auxin production. The polypeptide is Protein SPOROCYTELESS (Arabidopsis thaliana (Mouse-ear cress)).